The following is a 153-amino-acid chain: MAATTAPNPLTAYRFLLRATRIAFQGDFTTLHAARAEARKQFDQHRKQGVDTPMRIQHAMETAEILRTNVVQGVKISGAGEEAERYASILVMRRFRGEYEGEDERREKEEAMRELRIHEHIERGDNDSIKTAGKNERVKVAVGKACSNTQSSE.

The protein belongs to the complex I LYR family. MZM1 subfamily. As to quaternary structure, interacts with RIP1.

It localises to the mitochondrion matrix. Functionally, assembly factor required for Rieske Fe-S protein RIP1 incorporation into the cytochrome b-c1 (CIII) complex. Functions as a chaperone, binding to this subunit within the mitochondrial matrix and stabilizing it prior to its translocation and insertion into the late CIII dimeric intermediate within the mitochondrial inner membrane. Modulates the mitochondrial matrix zinc pool. This chain is Mitochondrial zinc maintenance protein 1, mitochondrial (MZM1), found in Ajellomyces capsulatus (strain G186AR / H82 / ATCC MYA-2454 / RMSCC 2432) (Darling's disease fungus).